The primary structure comprises 692 residues: Elongation factor G (692 aa).

A tr-type G domain is found at 8-283 (NRIRNIGIAA…AVIDYLPAPT (276 aa)). GTP-binding positions include 17 to 24 (AHIDAGKT), 81 to 85 (DTPGH), and 135 to 138 (NKMD).

Belongs to the TRAFAC class translation factor GTPase superfamily. Classic translation factor GTPase family. EF-G/EF-2 subfamily.

The protein localises to the cytoplasm. Functionally, catalyzes the GTP-dependent ribosomal translocation step during translation elongation. During this step, the ribosome changes from the pre-translocational (PRE) to the post-translocational (POST) state as the newly formed A-site-bound peptidyl-tRNA and P-site-bound deacylated tRNA move to the P and E sites, respectively. Catalyzes the coordinated movement of the two tRNA molecules, the mRNA and conformational changes in the ribosome. This is Elongation factor G (fusA) from Helicobacter pylori (strain ATCC 700392 / 26695) (Campylobacter pylori).